The chain runs to 190 residues: Guanylate kinase (190 aa).

Residues 3-185 form the Guanylate kinase-like domain; it reads NYIFIISAPS…SLEQLCKYFE (183 aa). Residue 10-17 participates in ATP binding; sequence APSGAGKS.

It belongs to the guanylate kinase family.

The protein resides in the cytoplasm. The enzyme catalyses GMP + ATP = GDP + ADP. Essential for recycling GMP and indirectly, cGMP. In Francisella tularensis subsp. holarctica (strain OSU18), this protein is Guanylate kinase.